We begin with the raw amino-acid sequence, 263 residues long: N-acyl homoserine lactonase AttM (263 aa).

7 residues coordinate Zn(2+): histidine 103, histidine 105, aspartate 107, histidine 108, histidine 180, aspartate 202, and histidine 247.

It belongs to the metallo-beta-lactamase superfamily. The cofactor is Zn(2+).

The enzyme catalyses an N-acyl-L-homoserine lactone + H2O = an N-acyl-L-homoserine + H(+). In Rhizobium johnstonii (strain DSM 114642 / LMG 32736 / 3841) (Rhizobium leguminosarum bv. viciae), this protein is N-acyl homoserine lactonase AttM.